A 340-amino-acid polypeptide reads, in one-letter code: Fructose-bisphosphate aldolase (340 aa).

Ser-53 serves as a coordination point for D-glyceraldehyde 3-phosphate. Residue Asp-95 is the Proton donor of the active site. His-96, Asp-131, Glu-161, and His-212 together coordinate Zn(2+). Gly-213 is a dihydroxyacetone phosphate binding site. His-249 serves as a coordination point for Zn(2+). Residues 250–252 (GGS) and 271–274 (NLDT) contribute to the dihydroxyacetone phosphate site.

Belongs to the class II fructose-bisphosphate aldolase family. Zn(2+) serves as cofactor.

It catalyses the reaction beta-D-fructose 1,6-bisphosphate = D-glyceraldehyde 3-phosphate + dihydroxyacetone phosphate. It participates in carbohydrate degradation; glycolysis; D-glyceraldehyde 3-phosphate and glycerone phosphate from D-glucose: step 4/4. Catalyzes the aldol condensation of dihydroxyacetone phosphate (DHAP or glycerone-phosphate) with glyceraldehyde 3-phosphate (G3P) to form fructose 1,6-bisphosphate (FBP) in gluconeogenesis and the reverse reaction in glycolysis. The protein is Fructose-bisphosphate aldolase (fba) of Streptomyces galbus.